The sequence spans 326 residues: Ribosomal large subunit pseudouridine synthase D (326 aa).

Asp144 is an active-site residue.

This sequence belongs to the pseudouridine synthase RluA family.

The protein resides in the cytoplasm. It catalyses the reaction uridine(1911/1915/1917) in 23S rRNA = pseudouridine(1911/1915/1917) in 23S rRNA. In terms of biological role, responsible for synthesis of pseudouridine from uracil at positions 1911, 1915 and 1917 in 23S ribosomal RNA. The polypeptide is Ribosomal large subunit pseudouridine synthase D (Borreliella burgdorferi (strain ATCC 35210 / DSM 4680 / CIP 102532 / B31) (Borrelia burgdorferi)).